The primary structure comprises 332 residues: Nuclear migration protein nudC (332 aa).

Residues 122–161 (RQQLLDSAGGEPSASNRDGISKPIEKVDDESDKSELGKLM) are disordered. Residues 168 to 259 (CTLENYTWTQ…NKMNWWSRLV (92 aa)) enclose the CS domain.

This sequence belongs to the nudC family. In terms of assembly, interacts with PCID2.

It localises to the cytoplasm. In terms of biological role, chaperone protein with functions in nuclear localization and cytoplasmic mRNA trafficking. In postmitotic neurons, acts with nudE downstream of dar1 to ensure correct positioning of the nuclei in primary dendrites and as a consequence, is required for determining multipolar neuron morphology. Stabilizes PCID2 in the cytoplasm and thereby is required for promoting cytoplasmic mRNA trafficking. In Drosophila melanogaster (Fruit fly), this protein is Nuclear migration protein nudC.